The primary structure comprises 65 residues: VESP-VB2 (65 aa).

The signal sequence occupies residues 1 to 23; sequence MKMSILFLFALIASLACLQLTFA. 7 AXPX repeats span residues 23–26, 27–30, 31–34, 35–38, 39–42, 43–46, and 47–50; these read AAPA, ASPF, ANPG, ASPE, AAPL, ADPL, and ADPF. Residues 24 to 49 constitute a propeptide that is removed on maturation; it reads APAASPFANPGASPEAAPLADPLADP. Position 62 is a leucine amide (Leu-62).

The protein belongs to the MCD family. Mastoparan subfamily. Expressed by the venom gland.

The protein resides in the secreted. In terms of biological role, antimicrobial peptide. Shows activity against both Gram-positive and -negative bacteria, as well against fungi. Also promotes important mast cell degranulation. Shows little hemolytic activity on rabbit and human erythrocytes. Its mast cell degranulation activity may be related to the activation of G-protein coupled receptors in mast cells as well as interaction with other proteins located in cell endosomal membranes in the mast cells. In Vespa bicolor (Black shield wasp), this protein is VESP-VB2.